Reading from the N-terminus, the 401-residue chain is Shugoshin (401 aa).

The stretch at 3–49 (SKVEQQYKLLNAELMDQVQKQRLEIGEYRKRVISLEREIMDIREEHV) forms a coiled coil. Residues 82–197 (EPAPAAQINR…VEETQTEQNE (116 aa)) form a disordered region. Positions 98–108 (SSREICKDMRR) are enriched in basic and acidic residues. A compositionally biased stretch (low complexity) spans 114 to 137 (RTTRPISPRRSSSVTSTVSSTSRR). Phosphoserine; by AurB occurs at positions 124, 125, and 126. Residues 171–183 (VFDEDDSDDDFDE) are compositionally biased toward acidic residues. Threonine 331 is subject to Phosphothreonine; by PLK1. Positions 338-401 (EEMPSIRTRS…GSKGKAKAKK (64 aa)) are disordered. Polar residues predominate over residues 348 to 377 (RTAANKKSENTDMSSSFCNNSARPSRSCRP). The segment covering 387-401 (NKLRNGSKGKAKAKK) has biased composition (basic residues).

It belongs to the shugoshin family. Homodimer. Interacts with Incenp. In terms of processing, phosphorylation by polo-like kinase (PLK) on Thr-331 antagonizes cohesive function. Phosphorylation on Thr-331 at the metaphase anaphase transition leads to its dissociation from centromeres. In contrast, phosphorylation by aurB/ial on either Ser-124, Ser-125 or Ser-126 is required for association with centromeres.

The protein resides in the chromosome. The protein localises to the centromere. Functionally, plays a central role in chromosome cohesion during meiosis and mitosis by preventing premature dissociation of cohesin complex from centromeres after prophase, when most of cohesin complex dissociates from chromosomes arms. May act by protecting or Rad21 from cleavage by Sse/separase. Required during meiosis in both males and females. This is Shugoshin (mei-S332) from Drosophila melanogaster (Fruit fly).